Reading from the N-terminus, the 623-residue chain is Aspartate--tRNA(Asp/Asn) ligase (623 aa).

Glutamate 175 lines the L-aspartate pocket. Residues 199–202 (QQFK) form an aspartate region. 2 residues coordinate L-aspartate: arginine 221 and histidine 455. 221–223 (RDE) lines the ATP pocket. Glutamate 517 provides a ligand contact to ATP. Position 524 (arginine 524) interacts with L-aspartate. Residue 569-572 (GVDR) coordinates ATP.

Belongs to the class-II aminoacyl-tRNA synthetase family. Type 1 subfamily. Homodimer.

It localises to the cytoplasm. The catalysed reaction is tRNA(Asx) + L-aspartate + ATP = L-aspartyl-tRNA(Asx) + AMP + diphosphate. In terms of biological role, aspartyl-tRNA synthetase with relaxed tRNA specificity since it is able to aspartylate not only its cognate tRNA(Asp) but also tRNA(Asn). Reaction proceeds in two steps: L-aspartate is first activated by ATP to form Asp-AMP and then transferred to the acceptor end of tRNA(Asp/Asn). The sequence is that of Aspartate--tRNA(Asp/Asn) ligase from Methylocella silvestris (strain DSM 15510 / CIP 108128 / LMG 27833 / NCIMB 13906 / BL2).